The primary structure comprises 144 residues: Large ribosomal subunit protein uL16 (144 aa).

The span at 1–16 (MLVPKRVKHRKVQRGK) shows a compositional bias: basic residues. Residues 1-20 (MLVPKRVKHRKVQRGKMRGE) form a disordered region.

Belongs to the universal ribosomal protein uL16 family. As to quaternary structure, part of the 50S ribosomal subunit.

Functionally, binds 23S rRNA and is also seen to make contacts with the A and possibly P site tRNAs. The polypeptide is Large ribosomal subunit protein uL16 (Limosilactobacillus fermentum (strain NBRC 3956 / LMG 18251) (Lactobacillus fermentum)).